Reading from the N-terminus, the 219-residue chain is Claudin-20 (219 aa).

At 1–7 the chain is on the cytoplasmic side; that stretch reads MASAGLQ. The helical transmembrane segment at 8 to 28 threads the bilayer; that stretch reads LLAFILALSGVSGVLTATLLP. Residues 29-81 are Extracellular-facing; it reads NWKVNVDVDSNIITAIVQLHGLWMDCTWYSTGMFSCALKHSILSLPIHVQAAR. A helical transmembrane segment spans residues 82–102; that stretch reads ATMVLACVLSALGICTSTVGM. Topologically, residues 103 to 118 are cytoplasmic; sequence KCTRLGGDRETKSHAS. Residues 119-139 traverse the membrane as a helical segment; that stretch reads FAGGVCFMSAGISSLISTVWY. Topologically, residues 140–160 are extracellular; that stretch reads TKEIIANFLDLTVPESNKHEP. The chain crosses the membrane as a helical span at residues 161–181; it reads GGAIYIGFISAMLLFISGMIF. Residues 182–219 lie on the Cytoplasmic side of the membrane; it reads CTSCIKRNPEARLDPPTQQPISNTQLENNSTHNLKDYV. The interval 193 to 219 is disordered; sequence RLDPPTQQPISNTQLENNSTHNLKDYV. Positions 200-213 are enriched in polar residues; it reads QPISNTQLENNSTH.

Belongs to the claudin family.

The protein resides in the cell junction. The protein localises to the tight junction. It localises to the cell membrane. Plays a major role in tight junction-specific obliteration of the intercellular space, through calcium-independent cell-adhesion activity. The polypeptide is Claudin-20 (CLDN20) (Homo sapiens (Human)).